Reading from the N-terminus, the 33-residue chain is Photosystem II reaction center protein Psb30 (33 aa).

The helical transmembrane segment at 5-25 (IVAQLTVLALIVVSGPLVIAL) threads the bilayer.

Belongs to the Psb30/Ycf12 family. In terms of assembly, PSII is composed of 1 copy each of membrane proteins PsbA, PsbB, PsbC, PsbD, PsbE, PsbF, PsbH, PsbI, PsbJ, PsbK, PsbL, PsbM, PsbT, PsbX, PsbY, PsbZ, Psb30/Ycf12, peripheral proteins of the oxygen-evolving complex and a large number of cofactors. It forms dimeric complexes.

It is found in the plastid. Its subcellular location is the chloroplast thylakoid membrane. Functionally, a core subunit of photosystem II (PSII), probably helps stabilize the reaction center. The protein is Photosystem II reaction center protein Psb30 of Angiopteris evecta (Mule's foot fern).